Here is a 507-residue protein sequence, read N- to C-terminus: 2,3-bisphosphoglycerate-independent phosphoglycerate mutase (507 aa).

Mn(2+) contacts are provided by Asp-13 and Ser-63. Ser-63 (phosphoserine intermediate) is an active-site residue. Substrate-binding positions include His-122, 152–153 (RD), Arg-184, Arg-190, 256–259 (RADR), and Lys-330. 5 residues coordinate Mn(2+): Asp-397, His-401, Asp-438, His-439, and His-457.

This sequence belongs to the BPG-independent phosphoglycerate mutase family. In terms of assembly, monomer. Mn(2+) is required as a cofactor.

It carries out the reaction (2R)-2-phosphoglycerate = (2R)-3-phosphoglycerate. It functions in the pathway carbohydrate degradation; glycolysis; pyruvate from D-glyceraldehyde 3-phosphate: step 3/5. Its function is as follows. Catalyzes the interconversion of 2-phosphoglycerate and 3-phosphoglycerate. In Chromobacterium violaceum (strain ATCC 12472 / DSM 30191 / JCM 1249 / CCUG 213 / NBRC 12614 / NCIMB 9131 / NCTC 9757 / MK), this protein is 2,3-bisphosphoglycerate-independent phosphoglycerate mutase.